We begin with the raw amino-acid sequence, 181 residues long: MSDDQSPSPSGEPTAMDLVRRTLEEARAAARAQGKDAGRGRAAAPTPRRVAGQRRSWSGPGPDARDPQPLGRLARDLARKRGWSAQVAEGTVLGNWTAVVGHQIADHAVPTGLRDGVLSVSAESTAWATQLRMMQAQLLAKIAAAVGNGVVTSLKITGPAAPSWRKGPRHIAGRGPRDTYG.

A compositionally biased stretch (polar residues) spans 1-11 (MSDDQSPSPSG). Disordered regions lie at residues 1–70 (MSDD…PQPL) and 161–181 (APSW…DTYG). The segment covering 18-39 (LVRRTLEEARAAARAQGKDAGR) has biased composition (basic and acidic residues). Residues 40 to 50 (GRAAAPTPRRV) are compositionally biased toward low complexity.

Belongs to the UPF0232 family.

The chain is UPF0232 protein MAP_0004 from Mycolicibacterium paratuberculosis (strain ATCC BAA-968 / K-10) (Mycobacterium paratuberculosis).